A 62-amino-acid polypeptide reads, in one-letter code: Photosystem II reaction center protein Z (62 aa).

A run of 2 helical transmembrane segments spans residues 8–28 and 41–61; these read AVFASIAIPFIPVIGVPAVFA and FSGATPRIGPVPLVGILNSSV.

The protein belongs to the PsbZ family. In terms of assembly, PSII is composed of 1 copy each of membrane proteins PsbA, PsbB, PsbC, PsbD, PsbE, PsbF, PsbH, PsbI, PsbJ, PsbK, PsbL, PsbM, PsbT, PsbY, PsbZ, Psb30/Ycf12, at least 3 peripheral proteins of the oxygen-evolving complex and a large number of cofactors. It forms dimeric complexes.

Its subcellular location is the plastid. It localises to the chloroplast thylakoid membrane. May control the interaction of photosystem II (PSII) cores with the light-harvesting antenna, regulates electron flow through the 2 photosystem reaction centers. PSII is a light-driven water plastoquinone oxidoreductase, using light energy to abstract electrons from H(2)O, generating a proton gradient subsequently used for ATP formation. This is Photosystem II reaction center protein Z from Selaginella uncinata (Blue spike-moss).